A 277-amino-acid chain; its full sequence is GATA transcription factor 15 (277 aa).

The tract at residues Ala52–Ala94 is disordered. Over residues Thr58–Val74 the composition is skewed to low complexity. The GATA-type zinc finger occupies Cys154–Cys179.

This sequence belongs to the type IV zinc-finger family. Class B subfamily.

In terms of biological role, probable transcription factor that regulates organogenesis during transition from the vegetative to the reproductive phase. Regulates the expression of CYP78A11/PLA1, HD3A and MADS1 during reproductive development in rice. May act upstream of CYP78A11/PLA1 during panicle development. Acts independently of the photoperiodic and gibberellin signaling pathways. The sequence is that of GATA transcription factor 15 from Oryza sativa subsp. indica (Rice).